We begin with the raw amino-acid sequence, 952 residues long: Substrate-adhesion molecule (952 aa).

The N-terminal stretch at 1-25 is a signal peptide; sequence MKSQKIGSMILLIGILLAIFNFAYS. Residues 26–527 are Extracellular-facing; it reads DDDIERFSIN…TWFFDTNVET (502 aa). N-linked (GlcNAc...) asparagine glycans are attached at residues Asn-78, Asn-182, Asn-231, Asn-243, and Asn-412. The 34-residue stretch at 438 to 471 folds into the EGF-like domain; it reads EIRRCKDSCNGYGTCNTANYTCVCDSAHMGETCN. 3 cysteine pairs are disulfide-bonded: Cys-442–Cys-452, Cys-446–Cys-459, and Cys-461–Cys-470. A glycan (N-linked (GlcNAc...) asparagine) is linked at Asn-456. Residues 528-548 form a helical membrane-spanning segment; the sequence is GVIALACIFIAFVGILYIIDI. Residues 549–591 lie on the Cytoplasmic side of the membrane; that stretch reads GTTVPIDIKRAKDYAEENKSGQFPKATHEEASVLWWRDQRSHK. Residues 592–612 form a helical membrane-spanning segment; sequence AWTFMDQFQLISLVSHIGVVF. The Extracellular portion of the chain corresponds to 613 to 678; that stretch reads PSRFISFTEY…GDLYLLPNIL (66 aa). The helical transmembrane segment at 679–699 threads the bilayer; it reads FWFGLLLGVFLVPLLLAYAII. Topologically, residues 700-722 are cytoplasmic; the sequence is SFMESLIHWKEVVTNRLIHVLVR. The helical transmembrane segment at 723-743 threads the bilayer; sequence ILTFGYIGVLIAASFAMVTPL. Over 744 to 752 the chain is Extracellular; the sequence is HDYRIIIPG. A helical membrane pass occupies residues 753 to 773; sequence AIIFVLYGIGLPIAIWFLLAV. At 774–801 the chain is on the cytoplasmic side; sequence PEARLHNPTFKQRFGCLYVHYKPKTDHR. Residues 802–822 traverse the membrane as a helical segment; it reads FVVFMFIKRFIMAVIIGILSF. Topologically, residues 823–837 are extracellular; the sequence is KPMTNYPLTGTDLAV. A helical membrane pass occupies residues 838–858; sequence PIVQVVVIDIALIGYAVLLFI. The Cytoplasmic portion of the chain corresponds to 859–868; it reads RKPYFDHYQL. A helical membrane pass occupies residues 869-889; sequence WLEYLLTAINIVTVSLSLTHI. At 890–897 the chain is on the extracellular side; that stretch reads KSPSAAGE. The chain crosses the membrane as a helical span at residues 898 to 918; that stretch reads LIACLIQALALVACIAAYVVA. Residues 919–952 lie on the Cytoplasmic side of the membrane; that stretch reads WLQMRSSFIKKVKKYLCCCCKSSKSSGEIDLSKK.

It is found in the cell membrane. Involved in substrate adhesion, myosin-independent cytokinesis, organization of actin cytoskeleton, and phagocytosis. The protein is Substrate-adhesion molecule (sadA) of Dictyostelium discoideum (Social amoeba).